The primary structure comprises 237 residues: Phosphoribosylaminoimidazole-succinocarboxamide synthase (237 aa).

The protein belongs to the SAICAR synthetase family.

It catalyses the reaction 5-amino-1-(5-phospho-D-ribosyl)imidazole-4-carboxylate + L-aspartate + ATP = (2S)-2-[5-amino-1-(5-phospho-beta-D-ribosyl)imidazole-4-carboxamido]succinate + ADP + phosphate + 2 H(+). It functions in the pathway purine metabolism; IMP biosynthesis via de novo pathway; 5-amino-1-(5-phospho-D-ribosyl)imidazole-4-carboxamide from 5-amino-1-(5-phospho-D-ribosyl)imidazole-4-carboxylate: step 1/2. The sequence is that of Phosphoribosylaminoimidazole-succinocarboxamide synthase from Shigella dysenteriae serotype 1 (strain Sd197).